An 847-amino-acid chain; its full sequence is Cancer-associated gene 1 protein homolog (847 aa).

Residues 118–161 (EEKPELQSQVYNDPADASQKPDPLKEESLMESSTSENKDELVHE) are disordered. Residues 377-567 (NVILEKNDIN…AAKREAQACT (191 aa)) are a coiled coil.

In Rattus norvegicus (Rat), this protein is Cancer-associated gene 1 protein homolog (Cage1).